The primary structure comprises 213 residues: Achelase-1 (213 aa).

Residues 1 to 213 (IVGGSVTTIG…RYTSWIQSNA (213 aa)) enclose the Peptidase S1 domain. C26 and C42 are joined by a disulfide. Active-site charge relay system residues include H41 and D86. Cysteines 155 and 172 form a disulfide. S188 (charge relay system) is an active-site residue.

It belongs to the peptidase S1 family. Hemolymph and saliva of the larval form (caterpillar).

It localises to the secreted. Its subcellular location is the extracellular space. With respect to regulation, sensitive to serine proteinase inhibitors and thiol proteinase inhibitors. In terms of biological role, fibrinolytic activity; shows preferential cleavage of Arg-Gly bonds in all three fibrinogen chains. Contact with the caterpillars causes severe bleeding, due the anticoagulant effect of the protein. The protein is Achelase-1 of Lonomia achelous (Giant silkworm moth).